Reading from the N-terminus, the 211-residue chain is ATP phosphoribosyltransferase (211 aa).

Belongs to the ATP phosphoribosyltransferase family. Short subfamily. As to quaternary structure, heteromultimer composed of HisG and HisZ subunits.

It is found in the cytoplasm. It catalyses the reaction 1-(5-phospho-beta-D-ribosyl)-ATP + diphosphate = 5-phospho-alpha-D-ribose 1-diphosphate + ATP. Its pathway is amino-acid biosynthesis; L-histidine biosynthesis; L-histidine from 5-phospho-alpha-D-ribose 1-diphosphate: step 1/9. Catalyzes the condensation of ATP and 5-phosphoribose 1-diphosphate to form N'-(5'-phosphoribosyl)-ATP (PR-ATP). Has a crucial role in the pathway because the rate of histidine biosynthesis seems to be controlled primarily by regulation of HisG enzymatic activity. This Bacillus cereus (strain 03BB102) protein is ATP phosphoribosyltransferase.